A 105-amino-acid polypeptide reads, in one-letter code: Putative pterin-4-alpha-carbinolamine dehydratase (105 aa).

This sequence belongs to the pterin-4-alpha-carbinolamine dehydratase family.

It catalyses the reaction (4aS,6R)-4a-hydroxy-L-erythro-5,6,7,8-tetrahydrobiopterin = (6R)-L-erythro-6,7-dihydrobiopterin + H2O. This is Putative pterin-4-alpha-carbinolamine dehydratase from Sinorhizobium fredii (strain NBRC 101917 / NGR234).